Here is a 2104-residue protein sequence, read N- to C-terminus: Phenolphthiocerol synthesis polyketide synthase type I Pks15/1 (2104 aa).

Residues 41–464 (TEPVAVVGIG…GTNAHVILEE (424 aa)) enclose the Ketosynthase family 3 (KS3) domain. Residues Cys-211, His-346, and His-386 each act as for beta-ketoacyl synthase activity in the active site. The tract at residues 571–887 (TAVVFPGQGS…GQLFSTGMSV (317 aa)) is acyltransferase. Ser-662 serves as the catalytic For acyltransferase activity. Residues 935 to 1057 (HALLGAVVER…GMLGVEAASS (123 aa)) form an N-terminal hotdog fold region. Residues 935 to 1095 (HALLGAVVER…YAYGPGFQGL (161 aa)) are dehydratase. A PKS/mFAS DH domain is found at 935–1207 (HALLGAVVER…TRAMSAAQLR (273 aa)). The Proton acceptor; for dehydratase activity role is filled by His-967. Residues 1069–1207 (AESVDISDGY…TRAMSAAQLR (139 aa)) are C-terminal hotdog fold. Residue Asp-1128 is the Proton donor; for dehydratase activity of the active site. The segment at 1400-1705 (GTLEDLVIEP…QARHIGKVVL (306 aa)) is enoylreductase. NADP(+)-binding positions include 1530–1547 (VLIH…VQLA) and 1719–1734 (TVLI…AVLA). Positions 1718–1899 (ATVLITGATG…SVAWGLWEQS (182 aa)) are beta-ketoacyl reductase (KR). A Carrier domain is found at 2004-2079 (DALVGLVCLQ…AIAEYVGRQI (76 aa)). Ser-2039 carries the post-translational modification O-(pantetheine 4'-phosphoryl)serine. Residues 2081–2104 (DSQATQAEEEKLPESDGEMVSVTA) are disordered.

This sequence belongs to the thiolase-like superfamily. Beta-ketoacyl-ACP synthases family. Pantetheine 4'-phosphate is required as a cofactor.

The catalysed reaction is a fatty acyl-[ACP] + malonyl-[ACP] + H(+) = a 3-oxoacyl-[ACP] + holo-[ACP] + CO2. Its pathway is lipid metabolism; fatty acid biosynthesis. Functionally, catalyzes the elongation by iterative transfer of p-hydroxybenzoyl group from FadD22 (pHBA-S-FAdD22) to form p-hydroxyphenylalkanoate (pHPA) intermediates during phenolphthiocerol (PPOL) biosynthesis. PPOL is an important intermediate in the biosynthesis of phenolic glycolipid (mycosid B). This is Phenolphthiocerol synthesis polyketide synthase type I Pks15/1 (pks15/1) from Mycobacterium marinum (strain ATCC BAA-535 / M).